A 178-amino-acid chain; its full sequence is Interleukin-10 (178 aa).

The N-terminal stretch at 1–18 (MHSSALLCFLVFLAGVGA) is a signal peptide. An N-linked (GlcNAc...) asparagine glycan is attached at asparagine 29. 2 cysteine pairs are disulfide-bonded: cysteine 30–cysteine 126 and cysteine 80–cysteine 132. N-linked (GlcNAc...) asparagine glycosylation occurs at asparagine 134.

It belongs to the IL-10 family. In terms of assembly, homodimer. Interacts with IL10RA and IL10RB.

Its subcellular location is the secreted. Its function is as follows. Major immune regulatory cytokine that acts on many cells of the immune system where it has profound anti-inflammatory functions, limiting excessive tissue disruption caused by inflammation. Mechanistically, IL10 binds to its heterotetrameric receptor comprising IL10RA and IL10RB leading to JAK1 and STAT2-mediated phosphorylation of STAT3. In turn, STAT3 translocates to the nucleus where it drives expression of anti-inflammatory mediators. Targets antigen-presenting cells (APCs) such as macrophages and monocytes and inhibits their release of pro-inflammatory cytokines including granulocyte-macrophage colony-stimulating factor /GM-CSF, granulocyte colony-stimulating factor/G-CSF, IL-1 alpha, IL-1 beta, IL-6, IL-8 and TNF-alpha. Also interferes with antigen presentation by reducing the expression of MHC-class II and co-stimulatory molecules, thereby inhibiting their ability to induce T cell activation. In addition, controls the inflammatory response of macrophages by reprogramming essential metabolic pathways including mTOR signaling. In Felis catus (Cat), this protein is Interleukin-10 (IL10).